The sequence spans 601 residues: Elongation factor 4 (601 aa).

Positions 6-188 (KNIRNFSIIA…QIIKKIPAPD (183 aa)) constitute a tr-type G domain. Residues 18 to 23 (DHGKST) and 135 to 138 (NKID) contribute to the GTP site.

This sequence belongs to the TRAFAC class translation factor GTPase superfamily. Classic translation factor GTPase family. LepA subfamily.

It is found in the cell membrane. It carries out the reaction GTP + H2O = GDP + phosphate + H(+). In terms of biological role, required for accurate and efficient protein synthesis under certain stress conditions. May act as a fidelity factor of the translation reaction, by catalyzing a one-codon backward translocation of tRNAs on improperly translocated ribosomes. Back-translocation proceeds from a post-translocation (POST) complex to a pre-translocation (PRE) complex, thus giving elongation factor G a second chance to translocate the tRNAs correctly. Binds to ribosomes in a GTP-dependent manner. The polypeptide is Elongation factor 4 (Buchnera aphidicola subsp. Schizaphis graminum (strain Sg)).